The following is a 185-amino-acid chain: DNA-directed RNA polymerase 22 kDa subunit (185 aa).

The protein belongs to the poxviridae DNA-directed RNA polymerase 22 kDa subunit family. In terms of assembly, the DNA-dependent RNA polymerase used for intermediate and late genes expression consists of eight subunits Rpo30/OPG66, Rpo7/OPG90, Rpo22/OPG103, Rpo147/OPG105, Rpo18/OPG119, Rpo19/OPG131, Rpo132/OPG151 and Rpo35/OPG156. The same holoenzyme, with the addition of the transcription-specificity factor OPG109, is used for early gene expression.

The protein resides in the virion. The catalysed reaction is RNA(n) + a ribonucleoside 5'-triphosphate = RNA(n+1) + diphosphate. Functionally, part of the DNA-dependent RNA polymerase which catalyzes the transcription of viral DNA into RNA using the four ribonucleoside triphosphates as substrates. Responsible for the transcription of early, intermediate and late genes. DNA-dependent RNA polymerase associates with the early transcription factor (ETF), itself composed of OPG118 and OPG133, thereby allowing the early genes transcription. Late transcription, and probably also intermediate transcription, require newly synthesized RNA polymerase. In Cynomys gunnisoni (Gunnison's prairie dog), this protein is DNA-directed RNA polymerase 22 kDa subunit (OPG103).